The primary structure comprises 459 residues: Putrescine aminotransferase (459 aa).

Pyridoxal 5'-phosphate is bound by residues 150–151 (GT) and Gln274. Lys300 carries the N6-(pyridoxal phosphate)lysine modification. Thr332 is a pyridoxal 5'-phosphate binding site.

This sequence belongs to the class-III pyridoxal-phosphate-dependent aminotransferase family. Putrescine aminotransferase subfamily. Requires pyridoxal 5'-phosphate as cofactor.

It catalyses the reaction an alkane-alpha,omega-diamine + 2-oxoglutarate = an omega-aminoaldehyde + L-glutamate. The catalysed reaction is putrescine + 2-oxoglutarate = 1-pyrroline + L-glutamate + H2O. It carries out the reaction cadaverine + 2-oxoglutarate = 5-aminopentanal + L-glutamate. Its pathway is amine and polyamine degradation; putrescine degradation; 4-aminobutanal from putrescine (transaminase route): step 1/1. In terms of biological role, catalyzes the aminotransferase reaction from putrescine to 2-oxoglutarate, leading to glutamate and 4-aminobutanal, which spontaneously cyclizes to form 1-pyrroline. This is the first step in one of two pathways for putrescine degradation, where putrescine is converted into 4-aminobutanoate (gamma-aminobutyrate or GABA) via 4-aminobutanal. Also functions as a cadaverine transaminase in a a L-lysine degradation pathway to succinate that proceeds via cadaverine, glutarate and L-2-hydroxyglutarate. This is Putrescine aminotransferase from Shigella boydii serotype 4 (strain Sb227).